Reading from the N-terminus, the 130-residue chain is Small ribosomal subunit protein uS8 (130 aa).

Belongs to the universal ribosomal protein uS8 family. In terms of assembly, part of the 30S ribosomal subunit.

Functionally, one of the primary rRNA binding proteins, it binds directly to 16S rRNA central domain where it helps coordinate assembly of the platform of the 30S subunit. This Pyrobaculum islandicum (strain DSM 4184 / JCM 9189 / GEO3) protein is Small ribosomal subunit protein uS8.